A 470-amino-acid chain; its full sequence is ATP synthase subunit beta (470 aa).

An ATP-binding site is contributed by Gly-157–Thr-164.

Belongs to the ATPase alpha/beta chains family. As to quaternary structure, F-type ATPases have 2 components, CF(1) - the catalytic core - and CF(0) - the membrane proton channel. CF(1) has five subunits: alpha(3), beta(3), gamma(1), delta(1), epsilon(1). CF(0) has three main subunits: a(1), b(2) and c(9-12). The alpha and beta chains form an alternating ring which encloses part of the gamma chain. CF(1) is attached to CF(0) by a central stalk formed by the gamma and epsilon chains, while a peripheral stalk is formed by the delta and b chains.

It is found in the cell inner membrane. It carries out the reaction ATP + H2O + 4 H(+)(in) = ADP + phosphate + 5 H(+)(out). Functionally, produces ATP from ADP in the presence of a proton gradient across the membrane. The catalytic sites are hosted primarily by the beta subunits. This Geobacter sulfurreducens (strain ATCC 51573 / DSM 12127 / PCA) protein is ATP synthase subunit beta.